Consider the following 98-residue polypeptide: Protein E7 (98 aa).

The tract at residues 1–40 (MRGETPTLQDYVLDLQPEATDLHCYEQLPDSSDEEDVIDS) is E7 terminal domain. An LXCXE motif; interaction with host RB1 and TMEM173/STING motif is present at residues 22–26 (LHCYE). A zinc finger lies at 58–94 (CCQCKSTLRLCVQSTQVDIRILQELLMGSFGIVCPNC). Residues 76-84 (IRILQELLM) carry the Nuclear export signal motif.

It belongs to the papillomaviridae E7 protein family. As to quaternary structure, homodimer. Homooligomer. Interacts with host RB1; this interaction induces dissociation of RB1-E2F1 complex thereby disrupting RB1 activity. Interacts with host EP300; this interaction represses EP300 transcriptional activity. Interacts with protein E2; this interaction inhibits E7 oncogenic activity. Interacts with host TMEM173/STING; this interaction impairs the ability of TMEM173/STING to sense cytosolic DNA and promote the production of type I interferon (IFN-alpha and IFN-beta). In terms of processing, highly phosphorylated.

It is found in the host cytoplasm. It localises to the host nucleus. Its function is as follows. E7 protein has both transforming and trans-activating activities. Disrupts the function of host retinoblastoma protein RB1/pRb, which is a key regulator of the cell cycle. Induces the disassembly of the E2F1 transcription factors from RB1, with subsequent transcriptional activation of E2F1-regulated S-phase genes. Inactivation of the ability of RB1 to arrest the cell cycle is critical for cellular transformation, uncontrolled cellular growth and proliferation induced by viral infection. Stimulation of progression from G1 to S phase allows the virus to efficiently use the cellular DNA replicating machinery to achieve viral genome replication. Interferes with histone deacetylation mediated by HDAC1 and HDAC2, leading to activation of transcription. Functionally, plays a role in viral genome replication by driving entry of quiescent cells into the cell cycle. Stimulation of progression from G1 to S phase allows the virus to efficiently use the cellular DNA replicating machinery to achieve viral genome replication. E7 protein has both transforming and trans-activating activities. Induces the disassembly of the E2F1 transcription factor from RB1, with subsequent transcriptional activation of E2F1-regulated S-phase genes. Interferes with host histone deacetylation mediated by HDAC1 and HDAC2, leading to transcription activation. Also plays a role in the inhibition of both antiviral and antiproliferative functions of host interferon alpha. Interaction with host TMEM173/STING impairs the ability of TMEM173/STING to sense cytosolic DNA and promote the production of type I interferon (IFN-alpha and IFN-beta). This chain is Protein E7, found in Homo sapiens (Human).